The chain runs to 676 residues: MTDKPIKTLTVEQAAEEAADLRPQLLEWGKQYYEADAPSVEDDVYDRVYARLVALETAFPEIVTPDSPTQRVGGSSRSDLPKVTHDIPMLSLGDVFSLDELTEFDERLRGNVDTPFDYNCELKIDGLAISLRYENGKFVQGSTRGNGQIGEDITANLKTIKSIPQTLSRPLTIEVRGECYMPKAAFLALNERREAAGQAPFANPRNAAAGSLRQLDTRVTADRQLATFMYNVADYEPLTTRTQSGLLDELAELGFTTNATYRVAHDMADVAAYIETYQAQRTELAYGIDGIVIKANDLPLQRSLGATVKVPRWAIAYKFPPEEVQTRVLDIEWTIGRTGVVTPTAIMEPVALAGSTVARASLHNPDYLIAKDIRIGDTVLLHKAGDIIPEISQYVAAKRPAEAKAYVIPTTCPSCGAELVHLDDEVALRCINPRCPAQLAEGMNHFASRNAMNIAGLGPQIVAQLFDRNLVQDVADLYRLTTDQLLTLDKFGEKSAQNLLTAIDNSRNNSLERLLFGLGIRHVGAKAARSLAAAFGDMASLMAADSEQISAIDTVGGIIADSVVTYFANTQVHELVAKLQAVGVNMTYTSGTPATNSTSEFTGKRVVLTGKLQELTRPQATEWLEQHGATVTGSVSKKTDLLIAGEAAGSKLAKAQSLDVPVWNEAQLQAAMDETK.

Residues aspartate 42–aspartate 46, serine 91–leucine 92, and glutamate 121 each bind NAD(+). The N6-AMP-lysine intermediate role is filled by lysine 123. NAD(+) is bound by residues arginine 144, glutamate 178, lysine 294, and lysine 318. Residues cysteine 412, cysteine 415, cysteine 430, and cysteine 435 each contribute to the Zn(2+) site. The BRCT domain occupies asparagine 596–lysine 676.

Belongs to the NAD-dependent DNA ligase family. LigA subfamily. It depends on Mg(2+) as a cofactor. Mn(2+) is required as a cofactor.

The catalysed reaction is NAD(+) + (deoxyribonucleotide)n-3'-hydroxyl + 5'-phospho-(deoxyribonucleotide)m = (deoxyribonucleotide)n+m + AMP + beta-nicotinamide D-nucleotide.. Its function is as follows. DNA ligase that catalyzes the formation of phosphodiester linkages between 5'-phosphoryl and 3'-hydroxyl groups in double-stranded DNA using NAD as a coenzyme and as the energy source for the reaction. It is essential for DNA replication and repair of damaged DNA. The protein is DNA ligase of Levilactobacillus brevis (strain ATCC 367 / BCRC 12310 / CIP 105137 / JCM 1170 / LMG 11437 / NCIMB 947 / NCTC 947) (Lactobacillus brevis).